Reading from the N-terminus, the 267-residue chain is Ribosomal RNA small subunit methyltransferase A (267 aa).

S-adenosyl-L-methionine contacts are provided by Asn18, Leu20, Gly45, Glu66, Asp91, and Asn112.

This sequence belongs to the class I-like SAM-binding methyltransferase superfamily. rRNA adenine N(6)-methyltransferase family. RsmA subfamily.

The protein localises to the cytoplasm. It carries out the reaction adenosine(1518)/adenosine(1519) in 16S rRNA + 4 S-adenosyl-L-methionine = N(6)-dimethyladenosine(1518)/N(6)-dimethyladenosine(1519) in 16S rRNA + 4 S-adenosyl-L-homocysteine + 4 H(+). Functionally, specifically dimethylates two adjacent adenosines (A1518 and A1519) in the loop of a conserved hairpin near the 3'-end of 16S rRNA in the 30S particle. May play a critical role in biogenesis of 30S subunits. The protein is Ribosomal RNA small subunit methyltransferase A of Shewanella sediminis (strain HAW-EB3).